We begin with the raw amino-acid sequence, 579 residues long: MASSSTSISLLLFVSFILLLVNSRAENASSGSDLDEELAFLAAEESKEQSHGGGSYHEEEHDHQHRDFENYDDLEQGGGEFHHGDHGYEEEPLPPVDEKDVAVLTKDNFTEFVGNNSFAMVEFYAPWCGACQALTPEYAAAATELKGLAALAKIDATEEGDLAQKYEIQGFPTVFLFVDGEMRKTYEGERTKDGIVTWLKKKASPSIHNITTKEEAERVLSAEPKLVFGFLNSLVGSESEELAAASRLEDDLSFYQTASPDIAKLFEIETQVKRPALVLLKKEEEKLARFDGNFTKTAIAEFVSANKVPLVINFTREGASLIFESSVKNQLILFAKANESEKHLPTLREVAKSFKGKFVFVYVQMDNEDYGEAVSGFFGVTGAAPKVLVYTGNEDMRKFILDGELTVNNIKTLAEDFLADKLKPFYKSDPLPENNDGDVKVIVGNNFDEIVLDESKDVLLEIYAPWCGHCQSFEPIYNKLGKYLKGIDSLVVAKMDGTSNEHPRAKADGFPTILFFPGGNKSFDPIAVDVDRTVVELYKFLKKHASIPFKLEKPATPEPVISTMKSDEKIEGDSSKDEL.

The N-terminal stretch at 1 to 25 (MASSSTSISLLLFVSFILLLVNSRA) is a signal peptide. N-linked (GlcNAc...) asparagine glycosylation occurs at Asn-27. Basic and acidic residues-rich tracts occupy residues 44–69 (EESK…RDFE) and 80–89 (EFHHGDHGYE). The disordered stretch occupies residues 44-91 (EESKEQSHGGGSYHEEEHDHQHRDFENYDDLEQGGGEFHHGDHGYEEE). In terms of domain architecture, Thioredoxin 1 spans 81-204 (FHHGDHGYEE…IVTWLKKKAS (124 aa)). Residues Asn-108 and Asn-115 are each glycosylated (N-linked (GlcNAc...) asparagine). Active-site nucleophile residues include Cys-128 and Cys-131. The cysteines at positions 128 and 131 are disulfide-linked. Residues Asn-209, Asn-293, Asn-313, and Asn-338 are each glycosylated (N-linked (GlcNAc...) asparagine). The 131-residue stretch at 416 to 546 (DFLADKLKPF…LYKFLKKHAS (131 aa)) folds into the Thioredoxin 2 domain. Catalysis depends on nucleophile residues Cys-467 and Cys-470. A disulfide bond links Cys-467 and Cys-470. A glycan (N-linked (GlcNAc...) asparagine) is linked at Asn-520. Residues 558–579 (EPVISTMKSDEKIEGDSSKDEL) form a disordered region. The segment covering 565 to 579 (KSDEKIEGDSSKDEL) has biased composition (basic and acidic residues). A Prevents secretion from ER motif is present at residues 576 to 579 (KDEL).

The protein belongs to the protein disulfide isomerase family. In terms of tissue distribution, widely expressed.

The protein resides in the endoplasmic reticulum lumen. It catalyses the reaction Catalyzes the rearrangement of -S-S- bonds in proteins.. In terms of biological role, acts as a protein-folding catalyst that interacts with nascent polypeptides to catalyze the formation, isomerization, and reduction or oxidation of disulfide bonds. In Arabidopsis thaliana (Mouse-ear cress), this protein is Protein disulfide isomerase-like 1-3 (PDIL1-3).